Reading from the N-terminus, the 191-residue chain is Putative manganese efflux pump MntP (191 aa).

6 consecutive transmembrane segments (helical) span residues 3–23, 37–57, 65–85, 107–129, 144–164, and 169–189; these read PISILLIGFAMSTDAFAAAIG, LRAGIIFGVIEAITPIIGWLL, VEAFDHWIAFGLLGALGIHMI, WKLALTGFATSIDAMAVGIGLAF, CTLTMVTVGIMLGRVLGSMVG, and IIGGVILVIIGATILYEHLHG.

Belongs to the MntP (TC 9.B.29) family.

The protein localises to the cell inner membrane. Probably functions as a manganese efflux pump. This is Putative manganese efflux pump MntP from Stenotrophomonas maltophilia (strain R551-3).